Reading from the N-terminus, the 95-residue chain is Co-chaperonin GroES (95 aa).

It belongs to the GroES chaperonin family. Heptamer of 7 subunits arranged in a ring. Interacts with the chaperonin GroEL.

The protein resides in the cytoplasm. Functionally, together with the chaperonin GroEL, plays an essential role in assisting protein folding. The GroEL-GroES system forms a nano-cage that allows encapsulation of the non-native substrate proteins and provides a physical environment optimized to promote and accelerate protein folding. GroES binds to the apical surface of the GroEL ring, thereby capping the opening of the GroEL channel. The chain is Co-chaperonin GroES from Glaesserella parasuis serovar 5 (strain SH0165) (Haemophilus parasuis).